The sequence spans 130 residues: Small ribosomal subunit protein uS9 (130 aa).

The protein belongs to the universal ribosomal protein uS9 family.

The sequence is that of Small ribosomal subunit protein uS9 from Neisseria meningitidis serogroup C (strain 053442).